The primary structure comprises 255 residues: Type III pantothenate kinase (255 aa).

D6–K13 provides a ligand contact to ATP. Position 107 to 110 (G107 to R110) interacts with substrate. The Proton acceptor role is filled by D109. An ATP-binding site is contributed by T132. T184 contributes to the substrate binding site.

This sequence belongs to the type III pantothenate kinase family. In terms of assembly, homodimer. The cofactor is NH4(+). K(+) serves as cofactor.

It localises to the cytoplasm. The enzyme catalyses (R)-pantothenate + ATP = (R)-4'-phosphopantothenate + ADP + H(+). It functions in the pathway cofactor biosynthesis; coenzyme A biosynthesis; CoA from (R)-pantothenate: step 1/5. Functionally, catalyzes the phosphorylation of pantothenate (Pan), the first step in CoA biosynthesis. The sequence is that of Type III pantothenate kinase from Roseiflexus sp. (strain RS-1).